Here is a 339-residue protein sequence, read N- to C-terminus: Probable cytosolic iron-sulfur protein assembly protein CIAO1 (339 aa).

WD repeat units lie at residues 14-53 (HPDS…WICK), 59-98 (GHQR…FECV), 103-142 (GHEN…EYEC), 148-187 (SHTQ…WVCC), 192-231 (GHES…NEQG), 250-289 (FHSR…DPQQ), and 301-339 (AHSQ…SEGI). An LYR motif; required for interaction with HSC20 motif is present at residues 176 to 178 (LYR).

It belongs to the WD repeat CIA1 family. In terms of assembly, component of the CIA complex. Interacts with CIAO2A and forms a complex with CIAO2B and MMS19; the interactions with CIAO2A and CIAO2B are mutually exclusive. Interacts with CHD1L, ERCC2, IREB2 and POLD1. Component of the MMXD complex, which includes CIAO1, ERCC2, CIAO2B, MMS19 and SLC25A5. Interacts with WT1. Interacts with CIAO3. Interacts (via LYR motif) with HSC20.

The protein localises to the cytoplasm. Its function is as follows. Key component of the cytosolic iron-sulfur protein assembly (CIA) complex, a multiprotein complex that mediates the incorporation of iron-sulfur cluster into extramitochondrial Fe/S proteins. As a CIA complex component, interacts specifically with CIAO2A or CIAO2B and MMS19 to assist different branches of iron-sulfur protein assembly, depending of its interactors. The complex CIAO1:CIAO2B:MMS19 binds to and facilitates the assembly of most cytosolic-nuclear Fe/S proteins. CIAO1:CIAO2A specifically matures ACO1 and stabilizes IREB2. Seems to specifically modulate the transactivation activity of WT1. As part of the mitotic spindle-associated MMXD complex it may play a role in chromosome segregation. In Bos taurus (Bovine), this protein is Probable cytosolic iron-sulfur protein assembly protein CIAO1.